Consider the following 462-residue polypeptide: tRNA modification GTPase MnmE (462 aa).

(6S)-5-formyl-5,6,7,8-tetrahydrofolate is bound by residues arginine 23, glutamate 86, and lysine 125. Positions 221-384 (GIPVAIVGEP…LKNQLLSFVN (164 aa)) constitute a TrmE-type G domain. Residue asparagine 231 coordinates K(+). Residues 231–236 (NVGKST), 250–256 (SEIAGTT), and 275–278 (DTAG) contribute to the GTP site. A Mg(2+)-binding site is contributed by serine 235. Positions 250, 252, and 255 each coordinate K(+). Position 256 (threonine 256) interacts with Mg(2+). Lysine 462 is a binding site for (6S)-5-formyl-5,6,7,8-tetrahydrofolate.

The protein belongs to the TRAFAC class TrmE-Era-EngA-EngB-Septin-like GTPase superfamily. TrmE GTPase family. Homodimer. Heterotetramer of two MnmE and two MnmG subunits. Requires K(+) as cofactor.

The protein resides in the cytoplasm. Exhibits a very high intrinsic GTPase hydrolysis rate. Involved in the addition of a carboxymethylaminomethyl (cmnm) group at the wobble position (U34) of certain tRNAs, forming tRNA-cmnm(5)s(2)U34. The sequence is that of tRNA modification GTPase MnmE from Flavobacterium psychrophilum (strain ATCC 49511 / DSM 21280 / CIP 103535 / JIP02/86).